Reading from the N-terminus, the 221-residue chain is Large ribosomal subunit protein uL3 (221 aa).

The protein belongs to the universal ribosomal protein uL3 family. In terms of assembly, part of the 50S ribosomal subunit. Forms a cluster with proteins L14 and L19.

One of the primary rRNA binding proteins, it binds directly near the 3'-end of the 23S rRNA, where it nucleates assembly of the 50S subunit. This chain is Large ribosomal subunit protein uL3, found in Nocardia farcinica (strain IFM 10152).